The primary structure comprises 139 residues: Short neuropeptide F (139 aa).

Residues 1-23 (MGRARRTVRAPAQHDALGGHALA) constitute a propeptide that is removed on maturation. Residues 1 to 48 (MGRARRTVRAPAQHDALGGHALARKSVRSPSRRLRFGRRSDPDMPPQA) are disordered. Over residues 22–37 (LARKSVRSPSRRLRFG) the composition is skewed to basic residues. The residue at position 36 (Phe-36) is a Phenylalanine amide. A propeptide spanning residues 40 to 62 (SDPDMPPQAPLDEMNELLSLREV) is cleaved from the precursor. Phe-70 bears the Phenylalanine amide mark. Positions 74–96 (SEERAVPHIFPQEFLTQEQDRAV) are excised as a propeptide. Phe-105 bears the Phenylalanine amide mark. Residues 109-139 (SDNNMFLLPYESALPQEVKANGSVEDDRQQE) constitute a propeptide that is removed on maturation.

It belongs to the NPY family. As to expression, sNPF peptide 1: Expressed in corpora cardiaca (CC), corpora allata (CA), antennal lobe (AL) and gnathal ganglion (GNG) (at protein level). Expression in AL detected in all animals, in GNG in most animals, expression in CC and CA in some animals (at protein level). sNPF peptide 2: Expressed in corpora cardiaca (CC), corpora allata (CA), antennal lobe (AL) and gnathal ganglion (GNG) (at protein level). Expression in AL detected in all animals, in GNG, CC and CA in most animals (at protein level). sNPF peptide 3: Expressed in corpora cardiaca (CC), corpora allata (CA), antennal lobe (AL) and gnathal ganglion (GNG) (at protein level). Expression detected in all animals (at protein level).

The protein localises to the secreted. In terms of biological role, plays a role in controlling food intake and regulating body size. The chain is Short neuropeptide F from Agrotis ipsilon (Black cutworm moth).